The primary structure comprises 251 residues: ATP synthase subunit a (251 aa).

6 helical membrane-spanning segments follow: residues 30 to 50, 86 to 106, 116 to 136, 145 to 165, 195 to 215, and 219 to 239; these read NSNE…VVAL, FFPF…LGLF, IAIT…VGFW, FFSP…IEIV, FMLM…IIPL, and IALT…FAIL.

This sequence belongs to the ATPase A chain family. As to quaternary structure, F-type ATPases have 2 components, CF(1) - the catalytic core - and CF(0) - the membrane proton channel. CF(1) has five subunits: alpha(3), beta(3), gamma(1), delta(1), epsilon(1). CF(0) has three main subunits: a(1), b(2) and c(9-12). The alpha and beta chains form an alternating ring which encloses part of the gamma chain. CF(1) is attached to CF(0) by a central stalk formed by the gamma and epsilon chains, while a peripheral stalk is formed by the delta and b chains.

The protein localises to the cell inner membrane. Key component of the proton channel; it plays a direct role in the translocation of protons across the membrane. The sequence is that of ATP synthase subunit a from Acidiphilium cryptum (strain JF-5).